We begin with the raw amino-acid sequence, 356 residues long: Dynein regulatory complex protein 10 (356 aa).

A coiled-coil region spans residues 126 to 167 (SNREFFEEVRDREERAVAEQEQLKQKLKLQRVELQKAAGTIQ). The tract at residues 173–209 (ARGEVSEVQSSTQQSRAAIEGSARAQSEADKSSFQSD) is disordered. The segment covering 178–187 (SEVQSSTQQS) has biased composition (low complexity). Positions 197–287 (AQSEADKSSF…LRQLQEYNSG (91 aa)) form a coiled coil. One can recognise an IQ domain in the interval 319–348 (QNHAARVIQSYWRGFKKAREAAKKKAKKLE).

It belongs to the DRC10 family. Component of the nexin-dynein regulatory complex (N-DRC).

It is found in the cytoplasm. Its subcellular location is the cytoskeleton. The protein localises to the flagellum axoneme. Component of the nexin-dynein regulatory complex (N-DRC), a key regulator of ciliary/flagellar motility which maintains the alignment and integrity of the distal axoneme and regulates microtubule sliding in motile axonemes. This Chlamydomonas reinhardtii (Chlamydomonas smithii) protein is Dynein regulatory complex protein 10.